The following is a 282-amino-acid chain: ADP-ribosyl cyclase/cyclic ADP-ribose hydrolase (282 aa).

The first 24 residues, 1–24, serve as a signal peptide directing secretion; the sequence is MSPVAIIACVCLAVTLTSISPSEA. Cystine bridges form between Cys-39–Cys-58, Cys-75–Cys-155, Cys-136–Cys-149, Cys-230–Cys-251, and Cys-263–Cys-272.

Belongs to the ADP-ribosyl cyclase family. Has different isoforms which may be the result of different amounts of phosphorylation. In terms of tissue distribution, immature occoyctes. Oocytes.

It localises to the cytoplasmic vesicle. It carries out the reaction NAD(+) = cyclic ADP-beta-D-ribose + nicotinamide + H(+). It catalyses the reaction nicotinate + NADP(+) = nicotinate-adenine dinucleotide phosphate + nicotinamide. The enzyme catalyses 2'-phospho-cyclic ADP-ribose + nicotinate = nicotinate-adenine dinucleotide phosphate. With respect to regulation, activity is presumably regulated by its sequestration in vesicles before egg fertilization. After fertilization and upon NADase release, it could then be regulated via its potential phosphorylation sites. Its function is as follows. Synthesizes cyclic ADP-ribose (cADPR), a second messenger for calcium mobilization from endoplasmic reticulum; ADP-ribose is a minor product. Synthesizes the Ca(2+) mobilizer nicotinate-adenine dinucleotide phosphate from 2'-phospho-cADPR and nicotinic acid as well as from NADP(+) and nicotinic acid; with NADP(+) as substrate preferentially catalyzes NADP(+) hydrolysis rather than NAADP(+) synthesis, about 70-fold better at pH 7.4. Has cADPR hydrolase activity at very high enzyme concentrations, which is probably not physiological. The conversion of NAD(+) into ADP-ribose is also only observed at high enzyme concentrations and results from the hydrolysis of cADP-ribose. This is ADP-ribosyl cyclase/cyclic ADP-ribose hydrolase from Aplysia californica (California sea hare).